The sequence spans 130 residues: Small ribosomal subunit protein uS9 (130 aa).

A disordered region spans residues 109 to 130 (RKKERKKYGQPGARAKFQYSKR).

Belongs to the universal ribosomal protein uS9 family.

The protein is Small ribosomal subunit protein uS9 of Maridesulfovibrio salexigens (strain ATCC 14822 / DSM 2638 / NCIMB 8403 / VKM B-1763) (Desulfovibrio salexigens).